The following is a 289-amino-acid chain: Ribosomal protein L11 methyltransferase (289 aa).

S-adenosyl-L-methionine-binding residues include Thr135, Gly156, Asp179, and Asn225.

Belongs to the methyltransferase superfamily. PrmA family.

The protein localises to the cytoplasm. The enzyme catalyses L-lysyl-[protein] + 3 S-adenosyl-L-methionine = N(6),N(6),N(6)-trimethyl-L-lysyl-[protein] + 3 S-adenosyl-L-homocysteine + 3 H(+). In terms of biological role, methylates ribosomal protein L11. This Chlorobaculum parvum (strain DSM 263 / NCIMB 8327) (Chlorobium vibrioforme subsp. thiosulfatophilum) protein is Ribosomal protein L11 methyltransferase.